We begin with the raw amino-acid sequence, 121 residues long: Natriuretic peptides B (121 aa).

Positions 1-26 (MDLQKVLPQMILLLLFLNLSPLGGHS) are cleaved as a signal peptide. Cysteines 99 and 115 form a disulfide.

Belongs to the natriuretic peptide family. The precursor molecule is proteolytically cleaved by the endoprotease Furin to produce brain natriuretic peptide 45. May undergo further proteolytic cleavage by various proteases such as DPP4, MME and possibly FAP, to give rise to a variety of shorter peptides. May be cleaved at Ser-91 by the prolyl endopeptidase FAP (seprase) activity (in vitro). May be degraded by IDE. During IDE degradation, the resulting products initially increase the activation of NPR1 and can also stimulate NPR2 to produce cGMP before the fragments are completely degraded and inactivated by IDE (in vitro). As to expression, expressed in the atria and ventricles, but at much lower levels than NPPA. Expression levels in the ventricles are slightly higher than in the atria. Very low levels of expression detected in the brain, hypothalamus, lung and aorta. In terms of tissue distribution, atria (at protein level). Cardiocytes (at protein level).

The protein localises to the secreted. Functionally, cardiac hormone that plays a key role in mediating cardio-renal homeostasis. May also function as a paracrine antifibrotic factor in the heart. Acts by specifically binding and stimulating NPR1 to produce cGMP, which in turn activates effector proteins that drive various biological responses. Likely involved in regulating the extracellular fluid volume and maintaining the fluid-electrolyte balance through natriuresis, diuresis, kaluresis and chloruresis. This chain is Natriuretic peptides B (Nppb), found in Rattus norvegicus (Rat).